Here is a 402-residue protein sequence, read N- to C-terminus: Major outer membrane porin (402 aa).

Positions 1–22 (MKKLLKSALLFAATGSALSLQA) are cleaved as a signal peptide.

Belongs to the chlamydial porin (CP) (TC 1.B.2) family. Part of a disulfide cross-linked outer membrane complex (COMC) composed of the major outer membrane porin (MOMP), the small cysteine-rich protein (OmcA) and the large cysteine-rich periplasmic protein (OmcB).

It is found in the cell outer membrane. In terms of biological role, in elementary bodies (EBs, the infectious stage, which is able to survive outside the host cell) provides the structural integrity of the outer envelope through disulfide cross-links with the small cysteine-rich protein and the large cysteine-rich periplasmic protein. It has been described in publications as the Sarkosyl-insoluble COMC (Chlamydia outer membrane complex), and serves as the functional equivalent of peptidoglycan. It is present but some of the disulfide bonds are reduced in reticulate bodies (RBs). Functionally, permits diffusion of specific solutes through the outer membrane. The polypeptide is Major outer membrane porin (ompA) (Chlamydophila psittaci (strain ATCC VR-125 / 6BC) (Chlamydia psittaci)).